The sequence spans 141 residues: Bombinins BLP-7/H-BO (141 aa).

A signal peptide spans 1–18 (MNFKYIIAVSFLIASTYA). Residues 19–43 (RSVKNDEQSLSQRDVLDEESLREIR) constitute a propeptide that is removed on maturation. The residue at position 70 (Asn-70) is an Asparagine amide. Positions 74 to 123 (TAEEHEVMKRLEAVMRDLDSLDHPEEASEKETRGFNQEEIANLFTKKEKR) are excised as a propeptide. A Leucine amide modification is found at Leu-140.

It belongs to the bombinin family. In terms of tissue distribution, expressed by the skin glands.

The protein resides in the secreted. In terms of biological role, antimicrobial peptide with activity against Gram-positive and -negative bacteria and fungi. Shows activity against P.acnes (MIC=5 uM), E.coli (MIC=5-6.3 uM), S.aureus (MIC=5-6.3 uM), M.luteus, S.cerevisiae and C.albicans (MIC=10-12.5 uM). Also reduces the production of interleukin (IL)-8 and granulocyte-macrophage colony stimulating factor (CSF2) in normal human epidermal keratinocytes (NHEKs). Shows anticancer activity against three human hepatoma cell lines. In vivo, using the rat ear edema model, suppress P.acnes-induced skin inflammation, significantly reducing the ear thickness. Shows weak hemolytic activity against human erythrocytes. Functionally, shows weak antimicrobial activity (tested on E.coli, S.aureus and C.albicans). Shows high hemolytic activity against human erythrocytes (38% erythrocyte lysis at 80.0 uM, and up to 85% at 159.7 uM). The sequence is that of Bombinins BLP-7/H-BO from Bombina orientalis (Oriental fire-bellied toad).